Consider the following 204-residue polypeptide: Putative uracil phosphoribosyltransferase urg2 (204 aa).

Residues R75, R100, and 126-134 (DPVMATGGT) each bind 5-phospho-alpha-D-ribose 1-diphosphate. A D-ribose 5-phosphate-binding site is contributed by Y187. Uracil contacts are provided by residues L188 and 193–195 (GDI). Residue D194 coordinates 5-phospho-alpha-D-ribose 1-diphosphate.

The protein belongs to the UPRTase family. Requires Mg(2+) as cofactor.

It is found in the cytoplasm. Its subcellular location is the nucleus. The enzyme catalyses UMP + diphosphate = 5-phospho-alpha-D-ribose 1-diphosphate + uracil. It participates in pyrimidine metabolism; UMP biosynthesis via salvage pathway; UMP from uracil: step 1/1. With respect to regulation, allosterically activated by GTP. In terms of biological role, catalyzes the conversion of uracil and 5-phospho-alpha-D-ribose 1-diphosphate (PRPP) to UMP and diphosphate. The polypeptide is Putative uracil phosphoribosyltransferase urg2 (Schizosaccharomyces pombe (strain 972 / ATCC 24843) (Fission yeast)).